A 201-amino-acid polypeptide reads, in one-letter code: Ras-related protein Rab-9A (201 aa).

An N-acetylalanine modification is found at alanine 2. Glycine 17 provides a ligand contact to GDP. Glycine 17, valine 18, glycine 19, lysine 20, serine 21, serine 22, threonine 34, histidine 38, and threonine 39 together coordinate GTP. 4 residues coordinate GDP: glycine 19, lysine 20, serine 21, and serine 22. Serine 21 contacts Mg(2+). Residues 31–42 (KFDTQLFHTIGV) carry the Switch 1 motif. Threonine 39 and aspartate 62 together coordinate Mg(2+). Positions 64–78 (AGQERFRSLRTPFYR) match the Switch 2 motif. 6 residues coordinate GTP: glycine 65, asparagine 124, lysine 125, aspartate 127, alanine 155, and lysine 156. GDP contacts are provided by asparagine 124, lysine 125, aspartate 127, alanine 155, and lysine 156. Serine 179 is subject to Phosphoserine. Residue threonine 187 is modified to Phosphothreonine. 2 S-geranylgeranyl cysteine lipidation sites follow: cysteine 200 and cysteine 201.

Belongs to the small GTPase superfamily. Rab family. Interacts (preferentially in its GTP-bound form) with GCC2 (via its GRIP domain). Interacts (GTP-bound form) with SGSM1; the GDP-bound form has much lower affinity for SGSM1. Interacts with SGSM2. The GTP-bound form but not the GDP-bound form interacts with HPS4 and BLOC-3 complex (heterodimer of HPS1 and HPS4) but does not interact with HPS1 alone. Interacts (GTP-bound form) with NDE1; two RAB9A-GTP molecules lie on the opposite sides of the NDE1 homodimer; the interaction leads to RAB9A-dynein motor tethering. Interacts (GTP-bound form) with NDEL1. It depends on Mg(2+) as a cofactor.

The protein localises to the cell membrane. It is found in the endoplasmic reticulum membrane. It localises to the golgi apparatus membrane. The protein resides in the late endosome. Its subcellular location is the cytoplasmic vesicle. The protein localises to the phagosome membrane. It is found in the phagosome. It localises to the cytoplasmic vesicle membrane. The protein resides in the melanosome. The enzyme catalyses GTP + H2O = GDP + phosphate + H(+). Its activity is regulated as follows. Regulated by guanine nucleotide exchange factors (GEFs) which promote the exchange of bound GDP for free GTP. Regulated by GTPase activating proteins (GAPs) which increase the GTP hydrolysis activity. Inhibited by GDP dissociation inhibitors (GDIs). The small GTPases Rab are key regulators of intracellular membrane trafficking, from the formation of transport vesicles to their fusion with membranes. Rabs cycle between an inactive GDP-bound form and an active GTP-bound form that is able to recruit to membranes different sets of downstream effectors directly responsible for vesicle formation, movement, tethering and fusion. RAB9A is involved in the transport of proteins between the endosomes and the trans-Golgi network (TGN). Specifically uses NDE1/NDEL1 as an effector to interact with the dynein motor complex in order to control retrograde trafficking of RAB9-associated late endosomes to the TGN. Involved in the recruitment of SGSM2 to melanosomes and is required for the proper trafficking of melanogenic enzymes TYR, TYRP1 and DCT/TYRP2 to melanosomes in melanocytes. The sequence is that of Ras-related protein Rab-9A from Homo sapiens (Human).